We begin with the raw amino-acid sequence, 502 residues long: Cytochrome P450 monooxygenase prhN (502 aa).

The helical transmembrane segment at 14 to 30 (SGALLIVGILLLRWALW) threads the bilayer. Asparagine 165 is a glycosylation site (N-linked (GlcNAc...) asparagine). Cysteine 443 contacts heme. N-linked (GlcNAc...) asparagine glycosylation is present at asparagine 474.

The protein belongs to the cytochrome P450 family. Requires heme as cofactor.

The protein resides in the membrane. It participates in secondary metabolite biosynthesis; terpenoid biosynthesis. Functionally, cytochrome P450 monooxygenase; part of the gene cluster that mediates the biosynthesis of paraherquonin, a meroterpenoid with a unique, highly congested hexacyclic molecular architecture. The first step of the pathway is the synthesis of 3,5-dimethylorsellinic acid (DMOA) by the polyketide synthase prhL. Synthesis of DMOA is followed by farnesylation by the prenyltransferase prhE, methylesterification by the methyl-transferase prhM, epoxidation of the prenyl chain by the flavin-dependent monooxygenase prhF, and cyclization of the farnesyl moiety by the terpene cyclase prhH, to yield the tetracyclic intermediate, protoaustinoid A. The short chain dehydrogenase prhI then oxidizes the C-3 alcohol group of the terpene cyclase product to transform protoaustinoid A into protoaustinoid B. The FAD-binding monooxygenase prhJ catalyzes the oxidation of protoaustinoid B into preaustinoid A which is further oxidized into preaustinoid A1 by FAD-binding monooxygenase phrK. Finally, prhA leads to berkeleydione via the berkeleyone B intermediate. PrhA is a multifunctional dioxygenase that first desaturates at C5-C6 to form berkeleyone B, followed by rearrangement of the A/B-ring to form the cycloheptadiene moiety in berkeleydione. Berkeleydione serves as the key intermediate for the biosynthesis of paraherquonin as well as many other meroterpenoids. The cytochrome P450 monooxygenases prhB, prhD, and prhN, as well as the isomerase prhC, are probably involved in the late stage of paraherquonin biosynthesis, after the production of berkeleydione. Especially prhC might be a multifunctional enzyme that catalyzes the D-ring expansion via intramolecular methoxy rearrangement, as well as the hydrolysis of the expanded D-ring. This Penicillium brasilianum protein is Cytochrome P450 monooxygenase prhN.